Consider the following 417-residue polypeptide: Testis-specific Y-encoded-like protein 5 (417 aa).

The segment covering 1-25 (MSGRSRGRKSSRAKNRGKGRAKARV) has biased composition (basic residues). Disordered regions lie at residues 1–55 (MSGR…QVQA), 93–112 (AAGD…AASL), 127–202 (GTVG…EGSM), and 391–417 (KGKE…SQSN). The segment covering 27 to 37 (PAPDDAPRDPD) has biased composition (basic and acidic residues). Over residues 93 to 103 (AAGDHGQAAAR) the composition is skewed to low complexity. Positions 182 to 191 (GEEKKEERDA) are enriched in basic and acidic residues. Polar residues predominate over residues 406–417 (METTQPGVSQSN).

Belongs to the nucleosome assembly protein (NAP) family. As to quaternary structure, interacts with USP7.

Functionally, involved in modulation of cell growth and cellular response to gamma radiation probably via regulation of the Akt signaling pathway. Involved in regulation of p53/TP53. Suppresses p53/TP53 protein levels and promotes its ubiquitination; the function is dependent on USP7 and independent on MDM2. Proposed to displace p53/TP53 from interaction with USP7. The protein is Testis-specific Y-encoded-like protein 5 (TSPYL5) of Homo sapiens (Human).